Here is a 129-residue protein sequence, read N- to C-terminus: Small ribosomal subunit protein uS9 (129 aa).

This sequence belongs to the universal ribosomal protein uS9 family.

The sequence is that of Small ribosomal subunit protein uS9 from Pelodictyon phaeoclathratiforme (strain DSM 5477 / BU-1).